A 1102-amino-acid chain; its full sequence is Putative ISWI chromatin-remodeling complex subunit YPL216W (1102 aa).

The WAC domain occupies 23–131; the sequence is ETPWVIKESS…DTVCLKTIQK (109 aa). Residues 271–301 are disordered; the sequence is ELYTPLTIPPESDVEPADWKETSETSETSET. The DDT domain maps to 375–435; that stretch reads QFPTERLLVV…FLKTYNSKGS (61 aa). A coiled-coil region spans residues 673–743; that stretch reads CNGIRLKLDS…EDIAFLEAKL (71 aa).

It localises to the nucleus. Its function is as follows. May be required for the activity of an ISWI chromatin-remodeling complex. This chain is Putative ISWI chromatin-remodeling complex subunit YPL216W, found in Saccharomyces cerevisiae (strain ATCC 204508 / S288c) (Baker's yeast).